The following is a 594-amino-acid chain: UvrABC system protein C (594 aa).

One can recognise a GIY-YIG domain in the interval 14 to 91 (DQPGCYLMKD…IKKHDPKYNI (78 aa)). Positions 196 to 231 (KEVRSELETKMYEASEKLEFERAKELRDQIAHIDAI) constitute a UVR domain.

Belongs to the UvrC family. As to quaternary structure, interacts with UvrB in an incision complex.

The protein localises to the cytoplasm. The UvrABC repair system catalyzes the recognition and processing of DNA lesions. UvrC both incises the 5' and 3' sides of the lesion. The N-terminal half is responsible for the 3' incision and the C-terminal half is responsible for the 5' incision. This is UvrABC system protein C from Bacillus cereus (strain Q1).